The chain runs to 1387 residues: Kinesin-like protein KIF15-B (1387 aa).

Positions 26 to 364 constitute a Kinesin motor domain; it reads AIKVFVRIRP…LQFAQRAKLI (339 aa). 110 to 117 provides a ligand contact to ATP; the sequence is GQTGSGKT. A coiled-coil region spans residues 369–1383; the sequence is VVNEDTQGNV…NLFLKETKKC (1015 aa). Residues 1138–1387 are necessary for its targeting to microtubule minus ends; it reads NSPVVLAQTP…KETKKCEHCD (250 aa).

Belongs to the TRAFAC class myosin-kinesin ATPase superfamily. Kinesin family. KLP2 subfamily. Homodimer. Dimerization is required for targeting to microtubule minus ends. Found in a complex with tpx2 and microtubules. Its association with microtubules and targeting to microtubule minus ends requires tpx2. Strongly expressed in testis and weakly in lung (at protein level).

It is found in the cytoplasm. It localises to the cytoskeleton. Its subcellular location is the microtubule organizing center. The protein resides in the centrosome. The protein localises to the spindle. It is found in the spindle pole. Its function is as follows. Plus-end directed kinesin-like motor enzyme involved in mitotic spindle assembly. Required for centrosome separation and maintenance of spindle bipolarity during mitosis. The protein is Kinesin-like protein KIF15-B (kif15-b) of Xenopus laevis (African clawed frog).